The primary structure comprises 520 residues: Endosomal/lysosomal proton channel TMEM175 (520 aa).

The tract at residues 1-27 (MGENDESEIIEHHDDEEMEKRRPPRTH) is disordered. The Cytoplasmic segment spans residues 1–49 (MGENDESEIIEHHDDEEMEKRRPPRTHAQSFLESVASSVKEGHSSTQSS). Residues 9–21 (IIEHHDDEEMEKR) show a composition bias toward basic and acidic residues. A helical transmembrane segment spans residues 50-72 (HRLLAYSDALISIIATVMILPVA). Residues 51 to 57 (RLLAYSD) carry the RxxxFSD motif 1 motif. At 73–93 (HTKIQEDEELKQSIQALLTTK) the chain is on the lumenal side. Positions 74-79 (TKIQED) are short helix H1-1. The interval 81 to 87 (ELKQSIQ) is short helix H2-1. A helical transmembrane segment spans residues 94–116 (IAVYLMTFLIVTVAWAAHIRLFQ). Residues 117 to 122 (VIERID) are Cytoplasmic-facing. Residues 123–144 (DTLALLNLACMMLITFLPYTFS) traverse the membrane as a helical segment. At 145-154 (LMATFPNNIL) the chain is on the lumenal side. The chain crosses the membrane as a helical span at residues 155–176 (GILLFCACVMVIGLIQALIVLY). Residues 177–200 (GFSHPFLLNDQIQMSENQAYYKQH) are Cytoplasmic-facing. The next 2 membrane-spanning stretches (helical) occupy residues 201–221 (ILKV…FSFI) and 222–242 (FFQL…ISQC). Topologically, residues 243-274 (LKWIRSKAIGGQTDESPDSMPFYTYHPSEPLS) are cytoplasmic. The helical transmembrane segment at 275–299 (KERVEAFSDGVFAIVATLLILDICE) threads the bilayer. Positions 277–283 (RVEAFSD) match the RxxxFSD motif 2 motif. Residues 300–326 (GNVPDPSVVKKKFDNSLIAALQEYGPE) are Lumenal-facing. Positions 305-313 (PSVVKKKFD) are short helix H1-2. Residues 315–321 (SLIAALQ) form a short helix H2-2 region. A helical transmembrane segment spans residues 327–349 (YLAYFGSFVTVGLLWFVHHSLFL). Residues 350 to 355 (HVTKAT) are Cytoplasmic-facing. Residues 356–377 (RLMGLFNTFSLAFVGGLPLAYQ) traverse the membrane as a helical segment. Over 378-392 (LTHESPRGSRNELEA) the chain is Lumenal. A helical membrane pass occupies residues 393–413 (VQISCVIIFFASLFQLAIWVT). At 414–433 (ALFTERETLHPYVRYGGREH) the chain is on the cytoplasmic side. The helical transmembrane segment at 434–457 (TFMLAKLSLYPCVALGTFFITCIL) threads the bilayer. Residues 458–459 (SR) lie on the Lumenal side of the membrane. A helical transmembrane segment spans residues 460-486 (FSAPIFHMMEICIPFAFLLLRLLVRVA). At 487 to 520 (LALLRWLFCSARNDLERIPVEEEESRLPINDIVT) the chain is on the cytoplasmic side.

The protein belongs to the TMEM175 family. Homodimer.

The protein resides in the endosome membrane. It is found in the lysosome membrane. It carries out the reaction H(+)(in) = H(+)(out). The enzyme catalyses K(+)(in) = K(+)(out). With respect to regulation, active at low pH (under pH 4.6): proton channel activity is activated by luminal side protons. Polyunsaturated fatty acids, such as arachidonic acid, also activate the channel activity. Its function is as follows. Proton-activated proton channel that catalyzes proton efflux from endosomes and lysosomes to maintain a steady-state pH. Activated at low pH (under pH 4.6) by luminal side protons: selectively mediates lysosomal proton release from lysosomes, eliciting a proton leak that balances V-ATPase activity to maintain pH homeostasis. Regulation of lumenal pH stability is required for autophagosome-lysosome fusion. Also acts as a potassium channel at higher pH, regulating potassium conductance in endosomes and lysosomes. The protein is Endosomal/lysosomal proton channel TMEM175 of Danio rerio (Zebrafish).